Consider the following 1160-residue polypeptide: MIKIITGRQTDPLQEKILATAIENYQQHPENETFIIVPNHIKFTTEVRAINKLASSKKQTETAVKNLHVLSFSRLAWFFLKDAEQGLPTQLDDAASAMLLTHIIEQKQDELIIFEQSNSGMVRQLYNTILQVYDGNLDLDNIDETNLDQETKSKIHDLRIIYDAFIEEIAGKFSTKNEVQVQLNDILAKNSELKNASFYFCDFSHFSLQEMLTIQILMRKAKNVTLAFKTRLGNINPKAEAGDYDYVIQQTIRRLVSFLQERDMDYVASEFPIPSEPTPREILNSLWTETVSKVDELKQVQLVKADSRYAEAYFVARTIYQQVALNNYRYRDFLILAPDLKEYETYLTPILRQNNIPFFNDLQQEMKYHPLVVLIENLFNLRDLKENPFQTQSMLAILKTHLLIPSWYKEEAEYIHDVDELENFVLAHGINHNLWKKHFADFVSAEVIRLDKIDEEVAKIDRLRGYLVDKVTNLFTKLEQEKDSQKALTIFFDFLTKNGIAERLEQWRDAANNAGDLQQAQQPEQLWDLLIQLLKDYLAINPEKFDLDEFFNMLISAFKEATFSQIPSTLDAVNLSEMGMVQTSGYKQVFIIGATSGNLPSIEKKPGFLTTENLNQLQSSFESDAYLEDNQRLNNLDQNYQFGLSLALAQDRVYISYPVLNASNEKLDPSIYYQRLQDYGAPEFSQHDLPEKMQELLSFITNPDASLGYLAYINSNTSDEAIDELLKITQKYLPQKVKAVLDASDFDNQPEDIGEDLAAELYGKNLYSSVSQLETFYENSYEYFLTYGLKLRRRLENEFDVIQAGNYFHETFDRLVKRLNEQHIDLADLSSVELEQQLNQVRDVIKDESKYAQLMNDPFNQYLFHCLDHTTSKVAQNWRKSLAETPLRAKYSELSFGLDQKIKGISLDIPDLPGNHQVNLRGKIDRVDLANFAEKDQVLAQVIDYKSSAKKFDLGMFYNGIALQMISYLDVLTNNNRFFAEEDKLSLLGAFYQTVTRQLERLNSNKLIDSSLNLRENAIDSKPKLMYTGLISNNPEILLEAEPLLDGKSSQASQLYTGVGTKARGGFKLPADRNFSEEEFQLLLEYDEYLIKEASRQILSGQIKLNPYRYGRSKNALTYSDFKDIFFFDAMLRHNQYHEISNMSKKDLLVKIKEKLGKKD.

Belongs to the helicase family. AddB/RexB type 2 subfamily. In terms of assembly, heterodimer of AddA and RexB. The cofactor is Mg(2+).

In terms of biological role, the heterodimer acts as both an ATP-dependent DNA helicase and an ATP-dependent, dual-direction single-stranded exonuclease. Recognizes the chi site generating a DNA molecule suitable for the initiation of homologous recombination. This subunit has 5' -&gt; 3' nuclease activity but not helicase activity. This chain is ATP-dependent helicase/deoxyribonuclease subunit B, found in Lactobacillus helveticus (strain DPC 4571).